Here is a 594-residue protein sequence, read N- to C-terminus: E3 ubiquitin-protein ligase TRAF7 (594 aa).

The disordered stretch occupies residues Met1–Leu33. A phosphoserine mark is found at Ser12 and Ser15. The segment covering Ser15 to Ser29 has biased composition (low complexity). Residues Cys55–Asn89 form an RING-type zinc finger. Residues His146–Gln216 form a TRAF-type zinc finger. WD repeat units lie at residues Gly318–Lys357, Gly361–Thr398, Ala401–Lys437, Glu439–Val478, Thr481–Thr518, Gly521–Thr562, and Arg565–Thr593.

This sequence belongs to the WD repeat TRAF7 family. Homodimer. Interacts with MAP3K3 and promotes the kinase activity of this enzyme. In terms of processing, phosphorylated by MAP3K3. Ubiquitinates itself upon phosphorylation. As to expression, ubiquitously expressed. Expression is relatively high in heart, liver, kidney, testis, prostate, thyroid, and salivary gland.

The protein resides in the cytoplasmic vesicle. Its subcellular location is the cytoplasm. It localises to the nucleus. It catalyses the reaction S-ubiquitinyl-[E2 ubiquitin-conjugating enzyme]-L-cysteine + [acceptor protein]-L-lysine = [E2 ubiquitin-conjugating enzyme]-L-cysteine + N(6)-ubiquitinyl-[acceptor protein]-L-lysine.. The protein operates within protein modification; protein ubiquitination. In terms of biological role, E3 ubiquitin and SUMO-protein ligase that plays a role in different biological processes such as innate immunity, inflammation or apoptosis. Potentiates MAP3K3-mediated activation of the NF-kappa-B, JUN/AP1 and DDIT3 transcriptional regulators. Negatively regulates MYB transcriptional activity by sequestering it to the cytosol via SUMOylation. Plays a role in the phosphorylation of MAPK1 and/or MAPK3, probably via its interaction with MAP3K3. Negatively regulates RLR-mediated innate immunity by promoting 'Lys-48'-linked ubiquitination of TBK1 through its RING domain to inhibit the cellular antiviral response. Promotes 'Lys-29'-linked polyubiquitination of NEMO/IKBKG and RELA leading to targeting these two proteins to lysosomal degradative pathways, reducing the transcriptional activity of NF-kappa-B. This chain is E3 ubiquitin-protein ligase TRAF7, found in Mus musculus (Mouse).